We begin with the raw amino-acid sequence, 248 residues long: tRNA (guanine-N(1)-)-methyltransferase (248 aa).

S-adenosyl-L-methionine is bound by residues Gly116 and 135–140 (IGDFVL).

This sequence belongs to the RNA methyltransferase TrmD family. As to quaternary structure, homodimer.

The protein localises to the cytoplasm. It catalyses the reaction guanosine(37) in tRNA + S-adenosyl-L-methionine = N(1)-methylguanosine(37) in tRNA + S-adenosyl-L-homocysteine + H(+). Its function is as follows. Specifically methylates guanosine-37 in various tRNAs. The chain is tRNA (guanine-N(1)-)-methyltransferase from Anaeromyxobacter sp. (strain Fw109-5).